A 441-amino-acid polypeptide reads, in one-letter code: UBX domain-containing protein 6 (441 aa).

A mediates interaction with LMAN1 region spans residues 1 to 10 (MKKFFQEFKA). Lys-2 is subject to N-acetylalanine. Disordered stretches follow at residues 13 to 79 (KFKS…QDTI) and 87 to 106 (LQAE…NVVS). The span at 22–36 (KLKESVGEKAHKEKP) shows a compositional bias: basic and acidic residues. A VCP/p97-interacting motif (VIM) region spans residues 51 to 63 (EAQMAAAAALARL). A compositionally biased stretch (low complexity) spans 52–61 (AQMAAAAALA). Ser-96 is subject to Phosphoserine. One can recognise a PUB domain in the interval 175–244 (VDTIAKYLDN…DPEEFYVLSE (70 aa)). In terms of domain architecture, UBX spans 332–408 (RKYNYTLLRV…GLVPSALLTF (77 aa)).

As to quaternary structure, interacts with VCP through the PUB domain (via C-terminus) and VIM motif (via N-terminus); the interaction is direct. Forms a ternary complex with CAV1 and VCP. Interacts with SYVN1. Interacts with HERPUD1. Interacts with VCPKMT. May interact with DERL1. Interacts with PLAA, VCP and YOD1; may form a complex involved in macroautophagy. Interacts with LMAN1. Enhanced expression in testis.

It is found in the cytoplasm. The protein resides in the cytosol. Its subcellular location is the membrane. It localises to the nucleus. The protein localises to the cytoskeleton. It is found in the microtubule organizing center. The protein resides in the centrosome. Its subcellular location is the early endosome membrane. It localises to the late endosome membrane. The protein localises to the lysosome membrane. In terms of biological role, may negatively regulate the ATPase activity of VCP, an ATP-driven segregase that associates with different cofactors to control a wide variety of cellular processes. As a cofactor of VCP, it may play a role in the transport of CAV1 to lysosomes for degradation. It may also play a role in endoplasmic reticulum-associated degradation (ERAD) of misfolded proteins. Together with VCP and other cofactors, it may play a role in macroautophagy, regulating for instance the clearance of damaged lysosomes. The polypeptide is UBX domain-containing protein 6 (Homo sapiens (Human)).